A 92-amino-acid polypeptide reads, in one-letter code: Small ribosomal subunit protein uS19 (92 aa).

It belongs to the universal ribosomal protein uS19 family.

Protein S19 forms a complex with S13 that binds strongly to the 16S ribosomal RNA. The chain is Small ribosomal subunit protein uS19 from Bacillus pumilus (strain SAFR-032).